The primary structure comprises 163 residues: Nucleotide-binding protein CJE0423 (163 aa).

This sequence belongs to the YajQ family.

In terms of biological role, nucleotide-binding protein. The chain is Nucleotide-binding protein CJE0423 from Campylobacter jejuni (strain RM1221).